Reading from the N-terminus, the 338-residue chain is Anthranilate phosphoribosyltransferase (338 aa).

Residues G81, G84–D85, T89, N91–T94, K109–S117, and S121 contribute to the 5-phospho-alpha-D-ribose 1-diphosphate site. Residue G81 coordinates anthranilate. A Mg(2+)-binding site is contributed by S93. Residue N112 coordinates anthranilate. R167 contributes to the anthranilate binding site. Residues D226 and E227 each contribute to the Mg(2+) site.

It belongs to the anthranilate phosphoribosyltransferase family. As to quaternary structure, homodimer. Mg(2+) serves as cofactor.

It catalyses the reaction N-(5-phospho-beta-D-ribosyl)anthranilate + diphosphate = 5-phospho-alpha-D-ribose 1-diphosphate + anthranilate. The protein operates within amino-acid biosynthesis; L-tryptophan biosynthesis; L-tryptophan from chorismate: step 2/5. In terms of biological role, catalyzes the transfer of the phosphoribosyl group of 5-phosphorylribose-1-pyrophosphate (PRPP) to anthranilate to yield N-(5'-phosphoribosyl)-anthranilate (PRA). The chain is Anthranilate phosphoribosyltransferase from Alkalilimnicola ehrlichii (strain ATCC BAA-1101 / DSM 17681 / MLHE-1).